Consider the following 510-residue polypeptide: Serine carboxypeptidase-like 48 (510 aa).

The signal sequence occupies residues 1 to 25; sequence MDSKTTFLTFLLCIFIFSHFSPSTS. Disulfide bonds link Cys141/Cys383, Cys309/Cys326, and Cys349/Cys354. N-linked (GlcNAc...) asparagine glycans are attached at residues Asn158 and Asn159. Residue Ser231 is part of the active site. Catalysis depends on residues Asp421 and His478.

Belongs to the peptidase S10 family. Ubiquitous.

Its subcellular location is the secreted. In terms of biological role, probable carboxypeptidase. This Arabidopsis thaliana (Mouse-ear cress) protein is Serine carboxypeptidase-like 48 (SCPL48).